We begin with the raw amino-acid sequence, 250 residues long: Lymphotoxin-beta (250 aa).

Residues methionine 1–alanine 26 are Cytoplasmic-facing. Residues alanine 27–methionine 47 form a helical; Signal-anchor for type II membrane protein membrane-spanning segment. At proline 48–glycine 250 the chain is on the extracellular side. Residues proline 87–valine 249 enclose the THD domain. N-linked (GlcNAc...) asparagine glycosylation is present at asparagine 228.

This sequence belongs to the tumor necrosis factor family. As to quaternary structure, heterotrimer of either two LTB and one LTA subunits or (less prevalent) two LTA and one LTB subunits.

Its subcellular location is the membrane. In terms of biological role, cytokine that binds to LTBR/TNFRSF3. May play a specific role in immune response regulation. Provides the membrane anchor for the attachment of the heterotrimeric complex to the cell surface. The chain is Lymphotoxin-beta (LTB) from Notamacropus eugenii (Tammar wallaby).